Reading from the N-terminus, the 442-residue chain is tRNA-2-methylthio-N(6)-dimethylallyladenosine synthase (442 aa).

The 119-residue stretch at 2–120 (KKVFIRTFGC…LPKMIVDKET (119 aa)) folds into the MTTase N-terminal domain. Positions 11, 49, 83, 157, 161, and 164 each coordinate [4Fe-4S] cluster. The 233-residue stretch at 143-375 (RVEGGAAFVS…NEVIEAETAR (233 aa)) folds into the Radical SAM core domain. The TRAM domain occupies 378 to 441 (QTMIGTVQRC…TFSLRGKIVE (64 aa)).

The protein belongs to the methylthiotransferase family. MiaB subfamily. As to quaternary structure, monomer. [4Fe-4S] cluster is required as a cofactor.

It localises to the cytoplasm. The enzyme catalyses N(6)-dimethylallyladenosine(37) in tRNA + (sulfur carrier)-SH + AH2 + 2 S-adenosyl-L-methionine = 2-methylsulfanyl-N(6)-dimethylallyladenosine(37) in tRNA + (sulfur carrier)-H + 5'-deoxyadenosine + L-methionine + A + S-adenosyl-L-homocysteine + 2 H(+). Its function is as follows. Catalyzes the methylthiolation of N6-(dimethylallyl)adenosine (i(6)A), leading to the formation of 2-methylthio-N6-(dimethylallyl)adenosine (ms(2)i(6)A) at position 37 in tRNAs that read codons beginning with uridine. This is tRNA-2-methylthio-N(6)-dimethylallyladenosine synthase from Neisseria gonorrhoeae (strain NCCP11945).